Here is a 476-residue protein sequence, read N- to C-terminus: Stromelysin-2 (476 aa).

The N-terminal stretch at 1-17 is a signal peptide; that stretch reads MEPLAILALLSLPICSA. Residues 18–99 constitute a propeptide, activation peptide; that stretch reads YPLHGAVTQG…PRCGVPDVGG (82 aa). Residues 90–97 carry the Cysteine switch motif; the sequence is PRCGVPDV. Residues Cys-92, His-168, Asp-170, His-183, His-196, and His-218 each contribute to the Zn(2+) site. Glu-219 is a catalytic residue. 2 residues coordinate Zn(2+): His-222 and His-228. 4 Hemopexin repeats span residues 286-335, 336-382, 384-432, and 433-476; these read PDKC…WPTL, PSDL…GFPP, VKKI…FPGI, and EPQV…WLLC. A disulfide bridge connects residues Cys-289 and Cys-476.

It belongs to the peptidase M10A family. The cofactor is Zn(2+). Requires Ca(2+) as cofactor. In terms of tissue distribution, expressed in small intestine. Weak levels in heart and lung.

The protein resides in the secreted. The protein localises to the extracellular space. Its subcellular location is the extracellular matrix. It catalyses the reaction Similar to stromelysin 1, but action on collagen types III, IV and V is weak.. Functionally, can degrade fibronectin, gelatins of type I, III, IV, and V; weakly collagens III, IV, and V. Activates procollagenase. This is Stromelysin-2 (Mmp10) from Mus musculus (Mouse).